Consider the following 99-residue polypeptide: Large ribosomal subunit protein uL23 (99 aa).

It belongs to the universal ribosomal protein uL23 family. In terms of assembly, part of the 50S ribosomal subunit. Contacts protein L29, and trigger factor when it is bound to the ribosome.

Its function is as follows. One of the early assembly proteins it binds 23S rRNA. One of the proteins that surrounds the polypeptide exit tunnel on the outside of the ribosome. Forms the main docking site for trigger factor binding to the ribosome. The chain is Large ribosomal subunit protein uL23 from Streptococcus suis (strain 98HAH33).